The chain runs to 157 residues: NAD(P)H-quinone oxidoreductase subunit N (157 aa).

Belongs to the complex I NdhN subunit family. NDH-1 can be composed of about 15 different subunits; different subcomplexes with different compositions have been identified which probably have different functions.

It is found in the cellular thylakoid membrane. The catalysed reaction is a plastoquinone + NADH + (n+1) H(+)(in) = a plastoquinol + NAD(+) + n H(+)(out). The enzyme catalyses a plastoquinone + NADPH + (n+1) H(+)(in) = a plastoquinol + NADP(+) + n H(+)(out). NDH-1 shuttles electrons from an unknown electron donor, via FMN and iron-sulfur (Fe-S) centers, to quinones in the respiratory and/or the photosynthetic chain. The immediate electron acceptor for the enzyme in this species is believed to be plastoquinone. Couples the redox reaction to proton translocation, and thus conserves the redox energy in a proton gradient. Cyanobacterial NDH-1 also plays a role in inorganic carbon-concentration. The sequence is that of NAD(P)H-quinone oxidoreductase subunit N from Picosynechococcus sp. (strain ATCC 27264 / PCC 7002 / PR-6) (Agmenellum quadruplicatum).